A 514-amino-acid polypeptide reads, in one-letter code: ATP synthase subunit alpha (514 aa).

Position 170-177 (170-177 (GDRQIGKT)) interacts with ATP.

This sequence belongs to the ATPase alpha/beta chains family. F-type ATPases have 2 components, CF(1) - the catalytic core - and CF(0) - the membrane proton channel. CF(1) has five subunits: alpha(3), beta(3), gamma(1), delta(1), epsilon(1). CF(0) has three main subunits: a(1), b(2) and c(9-12). The alpha and beta chains form an alternating ring which encloses part of the gamma chain. CF(1) is attached to CF(0) by a central stalk formed by the gamma and epsilon chains, while a peripheral stalk is formed by the delta and b chains.

It localises to the cell inner membrane. It catalyses the reaction ATP + H2O + 4 H(+)(in) = ADP + phosphate + 5 H(+)(out). Produces ATP from ADP in the presence of a proton gradient across the membrane. The alpha chain is a regulatory subunit. The polypeptide is ATP synthase subunit alpha (Alcanivorax borkumensis (strain ATCC 700651 / DSM 11573 / NCIMB 13689 / SK2)).